A 235-amino-acid polypeptide reads, in one-letter code: Large ribosomal subunit protein uL1 (235 aa).

The protein belongs to the universal ribosomal protein uL1 family. As to quaternary structure, part of the 50S ribosomal subunit.

Its function is as follows. Binds directly to 23S rRNA. The L1 stalk is quite mobile in the ribosome, and is involved in E site tRNA release. Functionally, protein L1 is also a translational repressor protein, it controls the translation of the L11 operon by binding to its mRNA. This chain is Large ribosomal subunit protein uL1, found in Renibacterium salmoninarum (strain ATCC 33209 / DSM 20767 / JCM 11484 / NBRC 15589 / NCIMB 2235).